Here is a 468-residue protein sequence, read N- to C-terminus: Glutamate--tRNA ligase (468 aa).

Arg-5 to Ala-7 serves as a coordination point for L-glutamate. The short motif at Pro-8 to Thr-18 is the 'HIGH' region element. His-15 provides a ligand contact to ATP. L-glutamate-binding positions include Glu-41, Tyr-187–Asn-191, and Arg-205. ATP-binding positions include Glu-208, Leu-236, Lys-243–Arg-247, and Lys-246. The 'KMSKS' region signature appears at Lys-243 to Arg-247. The segment at Gln-432 to Leu-447 is interaction with tRNA.

The protein belongs to the class-I aminoacyl-tRNA synthetase family. Glutamate--tRNA ligase type 1 subfamily. In terms of assembly, monomer.

The protein resides in the cytoplasm. The catalysed reaction is tRNA(Glu) + L-glutamate + ATP = L-glutamyl-tRNA(Glu) + AMP + diphosphate. Its activity is regulated as follows. In the absence of bound tRNA, ATP is bound in a non-productive mode, and the enzyme cannot activate amino acids. Catalyzes the attachment of glutamate to tRNA(Glu) in a two-step reaction: glutamate is first activated by ATP to form Glu-AMP and then transferred to the acceptor end of tRNA(Glu). The protein is Glutamate--tRNA ligase of Thermus thermophilus (strain ATCC 27634 / DSM 579 / HB8).